Consider the following 225-residue polypeptide: Heptaprenylglyceryl phosphate synthase (225 aa).

Sn-glycerol 1-phosphate is bound at residue lysine 6. Positions 8 and 34 each coordinate Mg(2+). Sn-glycerol 1-phosphate is bound by residues 153–158 (YVEYSG), glycine 183, and 203–204 (GN).

This sequence belongs to the GGGP/HepGP synthase family. Group I subfamily. In terms of assembly, homodimer. Requires Mg(2+) as cofactor.

The enzyme catalyses sn-glycerol 1-phosphate + all-trans-heptaprenyl diphosphate = 3-heptaprenyl-sn-glycero-1-phosphate + diphosphate. It functions in the pathway membrane lipid metabolism; glycerophospholipid metabolism. Prenyltransferase that catalyzes in vivo the transfer of the heptaprenyl moiety of heptaprenyl pyrophosphate (HepPP; 35 carbon atoms) to the C3 hydroxyl of sn-glycerol-1-phosphate (G1P), producing heptaprenylglyceryl phosphate (HepGP). This reaction is an ether-bond-formation step in the biosynthesis of archaea-type G1P-based membrane lipids found in Bacillales. To a much lesser extent, is also able to use geranylgeranyl diphosphate (GGPP; C20) as the prenyl donor. The protein is Heptaprenylglyceryl phosphate synthase of Listeria monocytogenes serovar 1/2a (strain ATCC BAA-679 / EGD-e).